A 59-amino-acid polypeptide reads, in one-letter code: Chromatin protein Cren7 (59 aa).

This sequence belongs to the Cren7 family. As to quaternary structure, monomer. Methylated at multiple sites, to varying extents.

The protein resides in the chromosome. It is found in the cytoplasm. Its function is as follows. A chromatin protein, binds double-stranded DNA without sequence specificity. Constrains negative DNA supercoils. This chain is Chromatin protein Cren7, found in Pyrobaculum neutrophilum (strain DSM 2338 / JCM 9278 / NBRC 100436 / V24Sta) (Thermoproteus neutrophilus).